Consider the following 627-residue polypeptide: Carene synthase, chloroplastic (627 aa).

The transit peptide at 1–36 (MSVISIMPLASKPCLNKSFISSTHEPKALRRPISTV) directs the protein to the chloroplast. The Mg(2+) site is built by Asp378, Asp382, and Asp530. Residues 378-382 (DDMYD) carry the DDXXD motif motif.

It belongs to the terpene synthase family. Tpsd subfamily. Mg(2+) serves as cofactor. It depends on Mn(2+) as a cofactor.

It is found in the plastid. The protein resides in the chloroplast. It catalyses the reaction (2E)-geranyl diphosphate = (+)-car-3-ene + diphosphate. It participates in terpene metabolism; oleoresin biosynthesis. Its function is as follows. Terpene synthase (TPS) involved in defensive oleoresin formation in conifers in response to insect attack or other injury. The sequence is that of Carene synthase, chloroplastic (3CAR) from Picea glauca (White spruce).